The primary structure comprises 354 residues: UDP-3-O-acylglucosamine N-acyltransferase (354 aa).

His247 serves as the catalytic Proton acceptor.

Belongs to the transferase hexapeptide repeat family. LpxD subfamily. As to quaternary structure, homotrimer.

It carries out the reaction a UDP-3-O-[(3R)-3-hydroxyacyl]-alpha-D-glucosamine + a (3R)-hydroxyacyl-[ACP] = a UDP-2-N,3-O-bis[(3R)-3-hydroxyacyl]-alpha-D-glucosamine + holo-[ACP] + H(+). It participates in bacterial outer membrane biogenesis; LPS lipid A biosynthesis. Its function is as follows. Catalyzes the N-acylation of UDP-3-O-acylglucosamine using 3-hydroxyacyl-ACP as the acyl donor. Is involved in the biosynthesis of lipid A, a phosphorylated glycolipid that anchors the lipopolysaccharide to the outer membrane of the cell. The chain is UDP-3-O-acylglucosamine N-acyltransferase from Chlamydia trachomatis serovar A (strain ATCC VR-571B / DSM 19440 / HAR-13).